A 457-amino-acid chain; its full sequence is C4-dicarboxylate transport protein (457 aa).

The next 7 helical transmembrane spans lie at 20 to 42 (LYFQVVVAIVLGALLGHFEPAFA), 51 to 73 (AFIKLVKMIIAPVIFLTIVTGIA), 88 to 110 (AMAYFLFFSTLALVVGLVVAHVV), 138 to 158 (LTLVGFLMDIIPNSLIGAFTG), 166 to 188 (LTGPNILQVLFVAVLFGVSLALV), 212 to 234 (ILMRAAPIGAFGAIAFTIGKYGV), and 241 to 263 (AWLVGSFYLTSLLFVLVILGLVS).

It belongs to the dicarboxylate/amino acid:cation symporter (DAACS) (TC 2.A.23) family.

The protein localises to the cell inner membrane. Functionally, responsible for the transport of dicarboxylates such as succinate, fumarate, and malate from the periplasm across the membrane. The protein is C4-dicarboxylate transport protein of Xanthomonas axonopodis pv. citri (strain 306).